The chain runs to 104 residues: DNA-directed RNA polymerase subunit omega (104 aa).

The interval glutamate 53 to isoleucine 104 is disordered. The segment covering proline 63 to isoleucine 104 has biased composition (basic and acidic residues).

This sequence belongs to the RNA polymerase subunit omega family. In terms of assembly, the RNAP catalytic core consists of 2 alpha, 1 beta, 1 beta' and 1 omega subunit. When a sigma factor is associated with the core the holoenzyme is formed, which can initiate transcription.

It carries out the reaction RNA(n) + a ribonucleoside 5'-triphosphate = RNA(n+1) + diphosphate. Promotes RNA polymerase assembly. Latches the N- and C-terminal regions of the beta' subunit thereby facilitating its interaction with the beta and alpha subunits. The protein is DNA-directed RNA polymerase subunit omega of Streptococcus pneumoniae serotype 2 (strain D39 / NCTC 7466).